The chain runs to 156 residues: RNA polymerase sigma factor SigS (156 aa).

The Polymerase core binding signature appears at 29–44; it reads EYYQLLLIKMWQLSQI. Positions 126–145 form a DNA-binding region, H-T-H motif; sequence QFEIAEIMSLSLSTIKLIKM.

Belongs to the sigma-70 factor family.

Functionally, sigma factors are initiation factors that promote the attachment of RNA polymerase to specific initiation sites and are then released. Sigma-S contributes to the protection against external stress, thus playing a role in cellular fitness and survival. This chain is RNA polymerase sigma factor SigS (sigS), found in Staphylococcus aureus (strain NCTC 8325 / PS 47).